Here is a 196-residue protein sequence, read N- to C-terminus: Molybdenum cofactor guanylyltransferase (196 aa).

GTP-binding positions include 14–16 (LAG), Lys-27, Asp-73, and Asp-106. Asp-106 lines the Mg(2+) pocket.

It belongs to the MobA family. In terms of assembly, monomer. The cofactor is Mg(2+).

It localises to the cytoplasm. The catalysed reaction is Mo-molybdopterin + GTP + H(+) = Mo-molybdopterin guanine dinucleotide + diphosphate. In terms of biological role, transfers a GMP moiety from GTP to Mo-molybdopterin (Mo-MPT) cofactor (Moco or molybdenum cofactor) to form Mo-molybdopterin guanine dinucleotide (Mo-MGD) cofactor. The chain is Molybdenum cofactor guanylyltransferase from Acidiphilium cryptum (strain JF-5).